The sequence spans 1860 residues: Collagen alpha-1(XXVII) chain (1860 aa).

The first 41 residues, 1–41 (MGAGSARGARGTAAAAAARGGGFLFSWILVSFACHLASTQG), serve as a signal peptide directing secretion. Positions 42-624 (APEDVDILQR…AGSTPFPLLM (583 aa)) are cleaved as a propeptide — N-terminal propeptide. In terms of domain architecture, Laminin G-like spans 71–236 (QSGFIFTQRA…NYCTHLRKQC (166 aa)). Asn271 carries an N-linked (GlcNAc...) asparagine glycan. 3 disordered regions span residues 278 to 608 (ALGS…TSSG), 625 to 772 (GPPG…GSDG), and 851 to 1625 (LKGD…IQLQ). Composition is skewed to polar residues over residues 298-309 (TKPQRTSPTNPH) and 386-409 (HPTQ…QVPP). Positions 432 to 445 (MPRPPPPSTRPLPP) are enriched in pro residues. 2 stretches are compositionally biased toward low complexity: residues 446–457 (TTSSSKKPIPTL) and 485–505 (TALS…RPPA). The segment covering 509–518 (PPTSGTSTPR) has biased composition (polar residues). Composition is skewed to low complexity over residues 572–588 (TTRP…QTTP) and 599–608 (SSSPRPTSSG). 16 consecutive Collagen-like domains span residues 625-679 (GPPG…GDPG), 688-747 (GAKG…PGPV), 748-807 (GDPG…DGNP), 808-867 (GELG…SGDP), 871-930 (GDKG…KGKP), 931-990 (GARG…PGPV), 1003-1062 (GEPG…RGAK), 1066-1125 (GPRG…PGTK), 1126-1185 (GLPG…IGQR), 1192-1251 (GDSG…QGEK), 1258-1317 (GAKG…KGIV), 1318-1378 (GPLG…RGKP), 1382-1441 (GQPG…EGIA), 1442-1501 (GPDG…PGQL), 1502-1561 (GPPG…QGPR), and 1562-1621 (GPPG…PGGP). The tract at residues 625–1618 (GPPGPKGDCG…RGRPGPPGPP (994 aa)) is triple-helical region. The segment covering 654 to 669 (RGPPGPYGNPGLPGPP) has biased composition (pro residues). The segment covering 714 to 734 (PGPAGHPGEQGQPGPEGSPGA) has biased composition (low complexity). 2 stretches are compositionally biased toward low complexity: residues 911-924 (FPGD…NGPE) and 932-944 (ARGL…QLGP). Residues 1033 to 1042 (GMPGGMGTPG) show a composition bias toward gly residues. A compositionally biased stretch (pro residues) spans 1043–1053 (EPGPQGPPGSR). Pro residues predominate over residues 1130-1142 (EPGPQGPQGPIGP). Basic and acidic residues-rich tracts occupy residues 1202–1220 (LKGD…EKGQ) and 1241–1253 (PEGK…EKGR). Basic and acidic residues-rich tracts occupy residues 1326–1338 (KGEK…DGKA) and 1350–1360 (PVGDRGDRGEP). Positions 1449 to 1458 (RDGQAGQQGE) are enriched in low complexity. Residues 1572 to 1587 (IVGPLGILGPSGLPGP) are compositionally biased toward low complexity. Residues 1603-1620 (RGPPGPRGRPGPPGPPGG) show a composition bias toward pro residues. Positions 1622-1860 (IQLQQDDLGA…RLEVGPACFL (239 aa)) are cleaved as a propeptide — C-terminal propeptide. Residues 1660–1860 (GEIFKTLHYL…RLEVGPACFL (201 aa)) form the Fibrillar collagen NC1 domain. 3 disulfides stabilise this stretch: Cys1690-Cys1722, Cys1731-Cys1858, and Cys1767-Cys1811. The Ca(2+) site is built by Asp1708, Asn1710, Cys1713, and Asp1716. N-linked (GlcNAc...) asparagine glycosylation is present at Asn1769.

This sequence belongs to the fibrillar collagen family.

Its subcellular location is the secreted. The protein localises to the extracellular space. The protein resides in the extracellular matrix. Its function is as follows. Plays a role during the calcification of cartilage and the transition of cartilage to bone. In Homo sapiens (Human), this protein is Collagen alpha-1(XXVII) chain (COL27A1).